The primary structure comprises 37 residues: Kappa-actitoxin-Bcs3b (37 aa).

In terms of domain architecture, ShKT spans 2–37 (CKDGFPTATCQHAKLVGNCKNSQKYRANCAKTCGPC). 3 disulfides stabilise this stretch: Cys2–Cys37, Cys11–Cys30, and Cys20–Cys34. A crucial for binding to potassium channels region spans residues 25 to 26 (KY).

Belongs to the sea anemone type 1 potassium channel toxin family. Type 1b subfamily.

The protein localises to the secreted. The protein resides in the nematocyst. Functionally, inhibits voltage-gated potassium channels (IC(50)=14.42 nM for rKCNA1/Kv1.1, IC(50)=80.4 nM for rKCNA2/Kv1.2, IC(50)=7.76 nM for rKCNA6/Kv1.6, IC(50)=13.12 nM for hKCNA3/Kv1.3, and IC(50)=49.14 nM for insect Shaker IR). Binds the Shaker IR channels in a voltage-independent manner. This is Kappa-actitoxin-Bcs3b from Bunodosoma caissarum (Sea anemone).